A 562-amino-acid chain; its full sequence is tRNA (guanine(37)-N(1))-methyltransferase (562 aa).

A mitochondrion-targeting transit peptide spans 1-41 (MLFRRFLNLTTKTPHLQTFRARHYFRNMSCPELIPPPTVRG). S-adenosyl-L-methionine contacts are provided by residues H243, 281–282 (DL), and N340. Residues 523–534 (AHIVAKKPEKKP) are compositionally biased toward basic and acidic residues. The interval 523-562 (AHIVAKKPEKKPLPAKPASKKNKNQANTKQVEAGLDKMQM) is disordered.

It belongs to the class I-like SAM-binding methyltransferase superfamily. TRM5/TYW2 family. In terms of assembly, monomer.

It is found in the mitochondrion matrix. Its subcellular location is the nucleus. The protein localises to the cytoplasm. The catalysed reaction is guanosine(37) in tRNA + S-adenosyl-L-methionine = N(1)-methylguanosine(37) in tRNA + S-adenosyl-L-homocysteine + H(+). Its function is as follows. Specifically methylates the N1 position of guanosine-37 in various cytoplasmic and mitochondrial tRNAs. Methylation is not dependent on the nature of the nucleoside 5' of the target nucleoside. This is the first step in the biosynthesis of wybutosine (yW), a modified base adjacent to the anticodon of tRNAs and required for accurate decoding. In Aedes aegypti (Yellowfever mosquito), this protein is tRNA (guanine(37)-N(1))-methyltransferase.